A 106-amino-acid polypeptide reads, in one-letter code: Glutaredoxin-1 (106 aa).

Ala2 is modified (N-acetylalanine). In terms of domain architecture, Glutaredoxin spans 3-106; sequence QAFVNSKIQP…TRLKQMGALQ (104 aa). Residue Lys9 is modified to N6-succinyllysine. Intrachain disulfides connect Cys23–Cys26 and Cys79–Cys83.

The protein belongs to the glutaredoxin family.

The protein resides in the cytoplasm. In terms of biological role, has a glutathione-disulfide oxidoreductase activity in the presence of NADPH and glutathione reductase. Reduces low molecular weight disulfides and proteins. This Bos taurus (Bovine) protein is Glutaredoxin-1 (GLRX).